Here is a 613-residue protein sequence, read N- to C-terminus: MAVSPTAKRKFHHPFRNLSRQSSSARTSAEAPPLPAVDQVLGGSADVSGGDQGGPGNTQPESPPAPLTRPPPPPPIFGSFSSSTCSFQSSISQEDAKPPYHPDTELKKVSRSLLRLQKYSLILGFVSINAGFIWALWNYHHYWYIFLPFLAANTFCQVIFAISNTIAATFTTLRRKLGFKKDVVPENPEKFVMVLPCYNEDRQEVETSLNSLINQQNIDEHPRLIMVIVDGNAKAPGEEVSTQDFLLNDMFAGGERIEFQNGYSARDGFFMPVTIQQGKYRGVPYIIIGKKHNQGKRDSLCFVRSFLWHYKNRSADISTMFNPDLFDYMGSILTDNGLDTIDYLCGMDGDTVFDDDCVYELIKALRRGGPDVVGVCGAVLVKFDEKPWGWWSVPSSQPPFFAWFTETNLRNRNLLQNTEYNLTQGLRREFQSRVSGKVNCLPGCCQLIRVQDATFGDAVLRERFGHVPKPNDTMTQQIMGVYSEDSIHASIIFSRHPKSQTRQALRARAYTTAPQSWSVYLSQRKRWALGSKSNEFVMVFRPGIIWVERLCSFITVTTWWLGPFVVAAMFGFAIALVRQGKKIFENHIMIGLMSVLAFRYAAKEKFKEKMPPV.

Positions 1 to 73 (MAVSPTAKRK…PAPLTRPPPP (73 aa)) are disordered. N17 carries an N-linked (GlcNAc...) asparagine glycan. The segment covering 18–27 (LSRQSSSART) has biased composition (polar residues). A compositionally biased stretch (pro residues) spans 61–73 (ESPPAPLTRPPPP). 2 helical membrane-spanning segments follow: residues 119–139 (YSLI…LWNY) and 142–162 (YWYI…IFAI). 3 N-linked (GlcNAc...) asparagine glycosylation sites follow: N312, N421, and N471. 2 consecutive transmembrane segments (helical) span residues 556-576 (VTTW…AIAL) and 583-602 (IFEN…RYAA).

It belongs to the chitin synthase family.

The protein resides in the cell membrane. The enzyme catalyses [(1-&gt;4)-N-acetyl-beta-D-glucosaminyl](n) + UDP-N-acetyl-alpha-D-glucosamine = [(1-&gt;4)-N-acetyl-beta-D-glucosaminyl](n+1) + UDP + H(+). Its function is as follows. Polymerizes chitin, a structural polymer of the cell wall and septum, by transferring the sugar moiety of UDP-GlcNAc to the non-reducing end of the growing chitin polymer. Plays a role in cell wall integrity. Plays a key role in pathogenicity. Likely contributes to post-penetration virulence. This chain is Chitin synthase 8, found in Verticillium dahliae (strain VdLs.17 / ATCC MYA-4575 / FGSC 10137) (Verticillium wilt).